The chain runs to 101 residues: Phosphoprotein OPG062 (101 aa).

Positions 48-76 are disordered; it reads VDKPSSPASERRPSSPSRCERMNNPGKQV. Residues S53 and S62 each carry the phosphoserine modification. The segment covering 56–68 has biased composition (basic and acidic residues); that stretch reads SERRPSSPSRCER.

The protein belongs to the orthopoxvirus OPG062 family. Self-associates to form high molecular-weight forms. Interacts with protein OPG157. Interacts with host RICTOR and RPTOR; these interactions disrupt the mTORC1 and mTORC2 crosstalk. Phosphorylated on two serines. While these phosphorylations do not play a role in virion assembly; they are essential for the interaction with host RICTOR and RPTOR.

It localises to the virion. Plays an essential role in virion assembly and morphogenesis. Also plays a role in the inhibition of host immune response by dysregulating mTOR. Sequesters host RICTOR and RPTOR, thereby disrupting mTORC1 and mTORC2 crosstalk. In turn, blocks the host antiviral response in part through mTOR-dependent degradation of cGAS, the primary poxvirus sensor. This Variola virus (isolate Human/India/Ind3/1967) (VARV) protein is Phosphoprotein OPG062 (OPG062).